A 520-amino-acid chain; its full sequence is GMP synthase [glutamine-hydrolyzing] (520 aa).

The region spanning 8 to 202 (RLLIIDFGSQ…FVRLAGFSGD (195 aa)) is the Glutamine amidotransferase type-1 domain. Cysteine 86 acts as the Nucleophile in catalysis. Residues histidine 177 and glutamate 179 contribute to the active site. In terms of domain architecture, GMPS ATP-PPase spans 203-395 (WTMGAYREQM…LGLPDSFIGR (193 aa)). 230–236 (SGGVDSS) contributes to the ATP binding site.

As to quaternary structure, homodimer.

It catalyses the reaction XMP + L-glutamine + ATP + H2O = GMP + L-glutamate + AMP + diphosphate + 2 H(+). The protein operates within purine metabolism; GMP biosynthesis; GMP from XMP (L-Gln route): step 1/1. Its function is as follows. Catalyzes the synthesis of GMP from XMP. This Ruegeria sp. (strain TM1040) (Silicibacter sp.) protein is GMP synthase [glutamine-hydrolyzing].